An 84-amino-acid chain; its full sequence is ATP synthase subunit c (84 aa).

Transmembrane regions (helical) follow at residues 9–29 (IIGA…GFAI) and 54–74 (IVAG…LLFI).

Belongs to the ATPase C chain family. As to quaternary structure, F-type ATPases have 2 components, F(1) - the catalytic core - and F(0) - the membrane proton channel. F(1) has five subunits: alpha(3), beta(3), gamma(1), delta(1), epsilon(1). F(0) has three main subunits: a(1), b(2) and c(10-14). The alpha and beta chains form an alternating ring which encloses part of the gamma chain. F(1) is attached to F(0) by a central stalk formed by the gamma and epsilon chains, while a peripheral stalk is formed by the delta and b chains.

It localises to the cell inner membrane. In terms of biological role, f(1)F(0) ATP synthase produces ATP from ADP in the presence of a proton or sodium gradient. F-type ATPases consist of two structural domains, F(1) containing the extramembraneous catalytic core and F(0) containing the membrane proton channel, linked together by a central stalk and a peripheral stalk. During catalysis, ATP synthesis in the catalytic domain of F(1) is coupled via a rotary mechanism of the central stalk subunits to proton translocation. Its function is as follows. Key component of the F(0) channel; it plays a direct role in translocation across the membrane. A homomeric c-ring of between 10-14 subunits forms the central stalk rotor element with the F(1) delta and epsilon subunits. This is ATP synthase subunit c from Haemophilus influenzae (strain PittEE).